The primary structure comprises 98 residues: Scrapie-responsive protein 1 (98 aa).

An N-terminal signal peptide occupies residues 1-20; sequence MKLMVLVFTIGLTLLLGVQA. N-linked (GlcNAc...) asparagine glycosylation is present at Asn-72.

This sequence belongs to the SCRG1 family. In terms of tissue distribution, expressed abundantly in the central nervous system of adult, but not at all in fetal brain. High levels of SCRG1 transcripts are also observed in testis and aorta.

It is found in the secreted. The protein is Scrapie-responsive protein 1 (SCRG1) of Homo sapiens (Human).